Consider the following 181-residue polypeptide: Germinal center-associated signaling and motility protein (181 aa).

Serine 102 bears the Phosphoserine mark. A compositionally biased stretch (basic and acidic residues) spans 117–128; it reads AERHKESSRGTE. Positions 117 to 181 are disordered; the sequence is AERHKESSRG…PYETHFSYPQ (65 aa). A Phosphotyrosine modification is found at tyrosine 150.

In terms of assembly, interacts with ACTB and MYH2; the interaction with MYH2 is increased by IL6-induced phosphorylation. Interacts (via C-terminus) with ARHGEF11 (via DH domain). Interacts with ARHGEF12. Interacts with SYK; the interaction increases after B-cell receptor stimulation, resulting in enhanced SYK autophosphorylation and activity. In terms of processing, phosphorylation on tyrosine residues can be induced by IL6. Phosphorylation is mediated by LYN. Post-translationally, targeted by the ubiquitin E3 ligase subunit FBXO10 to mediate its ubiquitination and degradation. In terms of tissue distribution, highly expressed in normal germinal center (GC) B-cells. Expressed in spleen and, to a lesser extent, bone marrow.

Its subcellular location is the cytoplasm. It is found in the cell membrane. Involved in the negative regulation of lymphocyte motility. It mediates the migration-inhibitory effects of IL6. Serves as a positive regulator of the RhoA signaling pathway. Enhancement of RhoA activation results in inhibition of lymphocyte and lymphoma cell motility by activation of its downstream effector ROCK. Is a regulator of B-cell receptor signaling, that acts through SYK kinase activation. This is Germinal center-associated signaling and motility protein (Gcsam) from Mus musculus (Mouse).